A 678-amino-acid chain; its full sequence is uncharacterized protein (678 aa).

Helical transmembrane passes span 14–34 (LMFA…WTGL) and 180–200 (GAVI…IGGF).

This sequence belongs to the mycobacterial PPE family.

The protein resides in the cell membrane. This is an uncharacterized protein from Mycobacterium tuberculosis (strain CDC 1551 / Oshkosh).